The following is a 287-amino-acid chain: MEGKEEDVRLGANKFTERQPIGTAAQSQDKDYKEPPPAPLFEPGELSSWSFYRAGIAEFVATFLFLYITILTVMGVVKSSTKCSTVGIQGIAWAFGGMIFALVYCTAGISGGHINPAVTFGLFLARKLSLTRALFYMVMQCLGAICGAGVVKGFQKGLYENNGGGANVVAPGYTKGDGLGAEIVGTFILVYTVFSATDAKRSARDSHVPILAPLPIGFAVFLVHLATIPITGTGINPARSLGAAIIYNKGHAWDDHWIFWVGPFIGAALAALYHQVVIRAIPFKSRS.

The tract at residues 1 to 37 (MEGKEEDVRLGANKFTERQPIGTAAQSQDKDYKEPPP) is disordered. Topologically, residues 1-55 (MEGKEEDVRLGANKFTERQPIGTAAQSQDKDYKEPPPAPLFEPGELSSWSFYRAG) are cytoplasmic. A helical transmembrane segment spans residues 56–76 (IAEFVATFLFLYITILTVMGV). Residues 77–89 (VKSSTKCSTVGIQ) are Extracellular-facing. A helical transmembrane segment spans residues 90-110 (GIAWAFGGMIFALVYCTAGIS). Over 111–133 (GGHINPAVTFGLFLARKLSLTRA) the chain is Cytoplasmic. An NPA 1 motif is present at residues 115 to 117 (NPA). The chain crosses the membrane as a helical span at residues 134 to 154 (LFYMVMQCLGAICGAGVVKGF). The Extracellular segment spans residues 155 to 175 (QKGLYENNGGGANVVAPGYTK). The chain crosses the membrane as a helical span at residues 176-196 (GDGLGAEIVGTFILVYTVFSA). The Cytoplasmic segment spans residues 197-209 (TDAKRSARDSHVP). Residues 210–230 (ILAPLPIGFAVFLVHLATIPI) form a helical membrane-spanning segment. At 231-257 (TGTGINPARSLGAAIIYNKGHAWDDHW) the chain is on the extracellular side. The short motif at 236 to 238 (NPA) is the NPA 2 element. Residues 258 to 278 (IFWVGPFIGAALAALYHQVVI) traverse the membrane as a helical segment. Over 279–287 (RAIPFKSRS) the chain is Cytoplasmic.

This sequence belongs to the MIP/aquaporin (TC 1.A.8) family. PIP (TC 1.A.8.11) subfamily. As to expression, barely detectable in roots, leaves and fruits.

The protein resides in the cell membrane. Functionally, water channel required to facilitate the transport of water across cell membrane; mercury-insensitive. Contributes to the tolerance to multiple abiotic stresses including salt (NaCl), cold and water deprivation, by modulating cytosolic K(+)/Na(+) ratio, maintaining osmotic balance, and reducing membrane injury (e.g. oxidative injury). The protein is Aquaporin PIP1-2 of Musa acuminata subsp. malaccensis (Wild banana).